We begin with the raw amino-acid sequence, 372 residues long: DNA replication and repair protein RecF (372 aa).

30 to 37 (GDNGQGKT) provides a ligand contact to ATP.

It belongs to the RecF family.

The protein resides in the cytoplasm. Functionally, the RecF protein is involved in DNA metabolism; it is required for DNA replication and normal SOS inducibility. RecF binds preferentially to single-stranded, linear DNA. It also seems to bind ATP. The polypeptide is DNA replication and repair protein RecF (Ruminiclostridium cellulolyticum (strain ATCC 35319 / DSM 5812 / JCM 6584 / H10) (Clostridium cellulolyticum)).